We begin with the raw amino-acid sequence, 132 residues long: Small ribosomal subunit protein uS8 (132 aa).

This sequence belongs to the universal ribosomal protein uS8 family. As to quaternary structure, part of the 30S ribosomal subunit. Contacts proteins S5 and S12.

Its function is as follows. One of the primary rRNA binding proteins, it binds directly to 16S rRNA central domain where it helps coordinate assembly of the platform of the 30S subunit. The chain is Small ribosomal subunit protein uS8 from Exiguobacterium sp. (strain ATCC BAA-1283 / AT1b).